A 474-amino-acid polypeptide reads, in one-letter code: uncharacterized protein (474 aa).

Residues 374-398 (GLICYLALFSISLMIENIIGLTISL) form a helical membrane-spanning segment.

It localises to the membrane. This is an uncharacterized protein from Borreliella burgdorferi (strain ATCC 35210 / DSM 4680 / CIP 102532 / B31) (Borrelia burgdorferi).